The sequence spans 390 residues: NADH-quinone oxidoreductase subunit D (390 aa).

This sequence belongs to the complex I 49 kDa subunit family. NDH-1 is composed of 14 different subunits. Subunits NuoB, C, D, E, F, and G constitute the peripheral sector of the complex.

Its subcellular location is the cell inner membrane. It carries out the reaction a quinone + NADH + 5 H(+)(in) = a quinol + NAD(+) + 4 H(+)(out). NDH-1 shuttles electrons from NADH, via FMN and iron-sulfur (Fe-S) centers, to quinones in the respiratory chain. The immediate electron acceptor for the enzyme in this species is believed to be ubiquinone. Couples the redox reaction to proton translocation (for every two electrons transferred, four hydrogen ions are translocated across the cytoplasmic membrane), and thus conserves the redox energy in a proton gradient. This chain is NADH-quinone oxidoreductase subunit D, found in Geotalea uraniireducens (strain Rf4) (Geobacter uraniireducens).